The following is a 118-amino-acid chain: Mitochondrial import inner membrane translocase subunit Tim10 B (118 aa).

A Twin CX3C motif motif is present at residues 31–55; sequence CFQRCVPSLHHRALDAEEEACLHSC. Cystine bridges form between Cys31–Cys55 and Cys35–Cys51. Positions 89–118 are disordered; it reads SAVPHATAEQLETSPSRSLPSGNLGKGGAG. Residues 98–109 show a composition bias toward polar residues; that stretch reads QLETSPSRSLPS.

It belongs to the small Tim family. Component of the TIM22 complex, which core is composed of TIMM22, associated with TIMM10 (TIMM10A and/or TIMM10B), TIMM9, AGK and TIMM29.

The protein localises to the mitochondrion inner membrane. Component of the TIM22 complex, a complex that mediates the import and insertion of multi-pass transmembrane proteins into the mitochondrial inner membrane. The TIM22 complex forms a twin-pore translocase that uses the membrane potential as the external driving force. In the TIM22 complex, it may act as a docking point for the soluble 70 kDa complex that guides the target proteins in transit through the aqueous mitochondrial intermembrane space. This chain is Mitochondrial import inner membrane translocase subunit Tim10 B (TIMM10B), found in Bos taurus (Bovine).